The chain runs to 237 residues: Probable 2-phosphosulfolactate phosphatase (237 aa).

Belongs to the ComB family. It depends on Mg(2+) as a cofactor.

It catalyses the reaction (2R)-O-phospho-3-sulfolactate + H2O = (2R)-3-sulfolactate + phosphate. The sequence is that of Probable 2-phosphosulfolactate phosphatase from Thermus thermophilus (strain ATCC 27634 / DSM 579 / HB8).